The sequence spans 164 residues: Large ribosomal subunit protein bL19 (164 aa).

A disordered region spans residues 144–164 (EAEKQTEVQAEPKIEKSEEKK).

This sequence belongs to the bacterial ribosomal protein bL19 family.

This protein is located at the 30S-50S ribosomal subunit interface and may play a role in the structure and function of the aminoacyl-tRNA binding site. This chain is Large ribosomal subunit protein bL19, found in Pelagibacter ubique (strain HTCC1062).